Consider the following 602-residue polypeptide: MGCGLNKLEKHDEKRPGNIYSTLKRPQVETKIDVSYEYRFLDFTTLNDAELPGSSAIKLSSLRDLPAQLQELYQQGFVLAAVHPFVQPTDEKEKTPQEQIFRAVLIKKTERSPKGGIHSEGYILEVECCSSVNQLSDKKEIPDFIKKIQDAASQGLKFVGIIPQYHSQKNCLVSSSLTPASNNSVQSRDNKNVSNCPEDHASLDGEKIDGINGCSTPAPGEENADQCATSREGRKGEGQAAEEPDCKSAKGSKEQHEHPGGREAPDTQNGVAENETPARCSKPLTDKTEIFTLFNKPKTPQRCSQYYTVTIPMRISRNGQTVNSLEANWLEHMTDHFRKGGSLVNAIFSLGMVNDSLHGTMDGVFLFEDVAVEDNKTTQGYDAIVVEQWTVLKGVEVQTDYVPLLNSLAIYGWQLTCVLPTPIVKTNREGNLSTKQIVFLQRPSLPQKAKKKESKFHWRFSKEDMHNKPMKKSRKTKLSSGEKQTAEKQEFEVTENTRNLAAQLSAASGPGPEQQLDSVINLGNETAGADSRGTLHDGVSEGTCPASADAGDTGGSEVQACPNQSAPNCCEEQEAAGQDCALGPDSCQGIDGAAADVEPSCE.

G2 is lipidated: N-myristoyl glycine. Residue C3 is the site of S-palmitoyl cysteine attachment. Polar residues predominate over residues 178–195; that stretch reads TPASNNSVQSRDNKNVSN. 3 disordered regions span residues 178-282, 451-495, and 524-567; these read TPAS…RCSK, KKES…EVTE, and NETA…QSAP. Basic and acidic residues-rich tracts occupy residues 197–209 and 244–265; these read PEDH…EKID and PDCK…REAP. Over residues 468–477 the composition is skewed to basic residues; it reads KPMKKSRKTK.

It belongs to the raftlin family.

The protein localises to the cell membrane. Its function is as follows. May play a pivotal role in the formation and/or maintenance of lipid rafts. May regulate B-cell antigen receptor-mediated signaling. This chain is Raftlin (RFTN1), found in Gallus gallus (Chicken).